Reading from the N-terminus, the 599-residue chain is Elongation factor 4 (599 aa).

The tr-type G domain maps to 5-187 (SHIRNFSIIA…RLVTAIPAPE (183 aa)). GTP contacts are provided by residues 17 to 22 (DHGKST) and 134 to 137 (NKMD).

This sequence belongs to the TRAFAC class translation factor GTPase superfamily. Classic translation factor GTPase family. LepA subfamily.

It localises to the cell inner membrane. It carries out the reaction GTP + H2O = GDP + phosphate + H(+). Functionally, required for accurate and efficient protein synthesis under certain stress conditions. May act as a fidelity factor of the translation reaction, by catalyzing a one-codon backward translocation of tRNAs on improperly translocated ribosomes. Back-translocation proceeds from a post-translocation (POST) complex to a pre-translocation (PRE) complex, thus giving elongation factor G a second chance to translocate the tRNAs correctly. Binds to ribosomes in a GTP-dependent manner. In Pseudomonas aeruginosa (strain LESB58), this protein is Elongation factor 4.